A 276-amino-acid polypeptide reads, in one-letter code: Undecaprenyl-diphosphatase 2 (276 aa).

8 consecutive transmembrane segments (helical) span residues 4-24 (IEAL…VSSL), 44-64 (DFLP…LIYF), 87-107 (ARLM…GLLL), 114-134 (LFAS…LLLW), 150-170 (LSFA…LPGF), 193-213 (FSFL…IPKL), 225-245 (LLLA…WFLM), and 256-276 (LRPF…FKLV).

It belongs to the UppP family.

The protein resides in the cell inner membrane. It carries out the reaction di-trans,octa-cis-undecaprenyl diphosphate + H2O = di-trans,octa-cis-undecaprenyl phosphate + phosphate + H(+). In terms of biological role, catalyzes the dephosphorylation of undecaprenyl diphosphate (UPP). Confers resistance to bacitracin. The sequence is that of Undecaprenyl-diphosphatase 2 from Chromobacterium violaceum (strain ATCC 12472 / DSM 30191 / JCM 1249 / CCUG 213 / NBRC 12614 / NCIMB 9131 / NCTC 9757 / MK).